The sequence spans 121 residues: Small ribosomal subunit protein bS21m (121 aa).

A mitochondrion-targeting transit peptide spans 1 to 14 (MNSSYFPGVLGVRW).

This sequence belongs to the bacterial ribosomal protein bS21 family. As to quaternary structure, component of the mitochondrial small ribosomal subunit (mt-SSU). Mature yeast 74S mitochondrial ribosomes consist of a small (37S) and a large (54S) subunit. The 37S small subunit contains a 15S ribosomal RNA (15S mt-rRNA) and at least 32 different proteins. The 54S large subunit contains a 21S rRNA (21S mt-rRNA) and at least 45 different proteins.

It is found in the mitochondrion. Its function is as follows. Component of the mitochondrial ribosome (mitoribosome), a dedicated translation machinery responsible for the synthesis of mitochondrial genome-encoded proteins, including at least some of the essential transmembrane subunits of the mitochondrial respiratory chain. The mitoribosomes are attached to the mitochondrial inner membrane and translation products are cotranslationally integrated into the membrane. This is Small ribosomal subunit protein bS21m (mrp21) from Schizosaccharomyces pombe (strain 972 / ATCC 24843) (Fission yeast).